The primary structure comprises 141 residues: Protein X (141 aa).

Positions 22–52 (GPQSSGPPFPRPAAGSAASSASSPSPSDESD) are disordered. Over residues 33–48 (PAAGSAASSASSPSPS) the composition is skewed to low complexity. The mitochondrial targeting sequence stretch occupies residues 68 to 113 (PCCLVFTCADLRTMDSTVNFVSWHAKRQLGMPSKDLWTPYIKDQLL).

Belongs to the orthohepadnavirus protein X family. May form homodimer. May interact with host CEBPA, CFLAR, CREB1, DDB1, E4F1, HBXIP, HSPD1/HSP60, NFKBIA, POLR2E and SMAD4. Interacts with host SMC5-SMC6 complex and induces its degradation. Interacts with host TRPC4AP; leading to prevent ubiquitination of TRPC4AP. Interacts with host PLSCR1; this interaction promotes ubiquitination and degradation of HBx and impairs HBx-mediated cell proliferation. Post-translationally, a fraction may be phosphorylated in insect cells and HepG2 cells, a human hepatoblastoma cell line. Phosphorylated in vitro by host protein kinase C or mitogen-activated protein kinase. N-acetylated in insect cells.

The protein resides in the host cytoplasm. The protein localises to the host nucleus. Its subcellular location is the host mitochondrion. Its function is as follows. Multifunctional protein that plays a role in silencing host antiviral defenses and promoting viral transcription. Does not seem to be essential for HBV infection. May be directly involved in development of cirrhosis and liver cancer (hepatocellular carcinoma). Most of cytosolic activities involve modulation of cytosolic calcium. The effect on apoptosis is controversial depending on the cell types in which the studies have been conducted. May induce apoptosis by localizing in mitochondria and causing loss of mitochondrial membrane potential. May also modulate apoptosis by binding host CFLAR, a key regulator of the death-inducing signaling complex (DISC). Promotes viral transcription by using the host E3 ubiquitin ligase DDB1 to target the SMC5-SMC6 complex to proteasomal degradation. This host complex would otherwise bind to viral episomal DNA, and prevents its transcription. Moderately stimulates transcription of many different viral and cellular transcription elements. Promoters and enhancers stimulated by HBx contain DNA binding sites for NF-kappa-B, AP-1, AP-2, c-EBP, ATF/CREB, or the calcium-activated factor NF-AT. This chain is Protein X, found in Woodchuck hepatitis B virus (isolate w64/pWS23) (WHV).